A 171-amino-acid polypeptide reads, in one-letter code: ATP synthase subunit b (171 aa).

The chain crosses the membrane as a helical span at residues 2–22 (FLVKMVLGFLIFLSPLCATGL).

Belongs to the ATPase B chain family. In terms of assembly, F-type ATPases have 2 components, F(1) - the catalytic core - and F(0) - the membrane proton channel. F(1) has five subunits: alpha(3), beta(3), gamma(1), delta(1), epsilon(1). F(0) has three main subunits: a(1), b(2) and c(10-14). The alpha and beta chains form an alternating ring which encloses part of the gamma chain. F(1) is attached to F(0) by a central stalk formed by the gamma and epsilon chains, while a peripheral stalk is formed by the delta and b chains.

The protein resides in the cell inner membrane. F(1)F(0) ATP synthase produces ATP from ADP in the presence of a proton or sodium gradient. F-type ATPases consist of two structural domains, F(1) containing the extramembraneous catalytic core and F(0) containing the membrane proton channel, linked together by a central stalk and a peripheral stalk. During catalysis, ATP synthesis in the catalytic domain of F(1) is coupled via a rotary mechanism of the central stalk subunits to proton translocation. Functionally, component of the F(0) channel, it forms part of the peripheral stalk, linking F(1) to F(0). The polypeptide is ATP synthase subunit b (Helicobacter pylori (strain Shi470)).